The following is a 278-amino-acid chain: MRDRLFSIIYKYNLRPNRTLGQNFLIVPDIIERNVKRAELSEKDTVLEIGPGLGVLTDELSKKAGKVYAIEADSRMIEILQREYSWPNVELIKGDAVKVEWPEFNKMVSNLPYQISSPVTFKLLKHEFERAVLIYQLEFAERMIAKPGDRNYSRLSLMVQAKANVELVERIGRGAFWPRPKVDSAVVVLEPKPEKERIELNENLVKALFQHRRSTVASALKKSAHMLGTDKKSIKDYLSSLPHAEKRVFQLSPEEVLDIEVYLRDNGLLSQKPEKGLN.

Residues asparagine 23, leucine 25, glycine 50, glutamate 71, aspartate 95, and asparagine 110 each contribute to the S-adenosyl-L-methionine site.

Belongs to the class I-like SAM-binding methyltransferase superfamily. rRNA adenine N(6)-methyltransferase family. RsmA subfamily.

Its subcellular location is the cytoplasm. In terms of biological role, specifically dimethylates two adjacent adenosines in the loop of a conserved hairpin near the 3'-end of 16S rRNA in the 30S particle. May play a critical role in biogenesis of 30S subunits. The polypeptide is Probable ribosomal RNA small subunit methyltransferase A (Thermococcus gammatolerans (strain DSM 15229 / JCM 11827 / EJ3)).